The chain runs to 227 residues: Uracil-DNA glycosylase (227 aa).

The active-site Proton acceptor is the aspartate 64.

The protein belongs to the uracil-DNA glycosylase (UDG) superfamily. UNG family.

It localises to the cytoplasm. The enzyme catalyses Hydrolyzes single-stranded DNA or mismatched double-stranded DNA and polynucleotides, releasing free uracil.. Its function is as follows. Excises uracil residues from the DNA which can arise as a result of misincorporation of dUMP residues by DNA polymerase or due to deamination of cytosine. In Alkaliphilus metalliredigens (strain QYMF), this protein is Uracil-DNA glycosylase.